Consider the following 114-residue polypeptide: Iron-sulfur cluster insertion protein ErpA (114 aa).

Positions 42, 106, and 108 each coordinate iron-sulfur cluster.

This sequence belongs to the HesB/IscA family. In terms of assembly, homodimer. The cofactor is iron-sulfur cluster.

Functionally, required for insertion of 4Fe-4S clusters for at least IspG. The polypeptide is Iron-sulfur cluster insertion protein ErpA (Klebsiella pneumoniae subsp. pneumoniae (strain ATCC 700721 / MGH 78578)).